Consider the following 541-residue polypeptide: Chaperonin GroEL 2 (541 aa).

Residues 29–32 (TLGP), 86–90 (DGTTT), G413, 478–480 (NAA), and D494 each bind ATP.

The protein belongs to the chaperonin (HSP60) family. In terms of assembly, forms a cylinder of 14 subunits composed of two heptameric rings stacked back-to-back. Interacts with the co-chaperonin GroES.

The protein localises to the cytoplasm. The enzyme catalyses ATP + H2O + a folded polypeptide = ADP + phosphate + an unfolded polypeptide.. Functionally, together with its co-chaperonin GroES, plays an essential role in assisting protein folding. The GroEL-GroES system forms a nano-cage that allows encapsulation of the non-native substrate proteins and provides a physical environment optimized to promote and accelerate protein folding. In Corynebacterium jeikeium (strain K411), this protein is Chaperonin GroEL 2.